A 1231-amino-acid chain; its full sequence is Fanconi anemia group J protein homolog (1231 aa).

The region spanning 11 to 448 (GGVKILFPCR…SDHEPLRAVC (438 aa)) is the Helicase ATP-binding domain. 46–53 (SPTGSGKS) contacts ATP. Disordered regions lie at residues 104–126 (TFSSDRQMNSTDNAPSNISGASS) and 147–166 (QDDDFQTDRKRIRQSHDEQL). The span at 152–166 (QTDRKRIRQSHDEQL) shows a compositional bias: basic and acidic residues. The Nuclear localization signal motif lies at 155-173 (RKRIRQSHDEQLQARKRRC). The [4Fe-4S] cluster site is built by C291, C304, C316, and C356. The short motif at 399–402 (DEAH) is the DEAH box element. Residues 890-903 (SKNQQQRMQMSSTN) show a composition bias toward polar residues. Disordered regions lie at residues 890-924 (SKNQQQRMQMSSTNCDDEPSQGTSSSSKNTSPTSS), 936-956 (VSEFTQPTSSTQSSVTSPPEI), and 1195-1231 (GNENAFNIGRNKGTEQKNRENRLSRSRNKGVSSFFLD). 2 stretches are compositionally biased toward low complexity: residues 909-924 (SQGTSSSSKNTSPTSS) and 940-954 (TQPTSSTQSSVTSPP). Residues 1206–1217 (KGTEQKNRENRL) are compositionally biased toward basic and acidic residues.

The protein belongs to the DEAD box helicase family. DEAH subfamily. The cofactor is [4Fe-4S] cluster.

It is found in the nucleus. It carries out the reaction Couples ATP hydrolysis with the unwinding of duplex DNA at the replication fork by translocating in the 5'-3' direction. This creates two antiparallel DNA single strands (ssDNA). The leading ssDNA polymer is the template for DNA polymerase III holoenzyme which synthesizes a continuous strand.. It catalyses the reaction ATP + H2O = ADP + phosphate + H(+). DNA-dependent helicase and 5' to 3' DNA helicase required for the maintenance of chromosomal stability. Involved in the repair of DNA double-strand breaks by homologous recombination. Involved in the repair of abasic sites at replication forks by promoting the degradation of DNA-protein cross-links: acts by catalyzing unfolding of HMCES DNA-protein cross-link via its helicase activity, exposing the underlying DNA and enabling cleavage of the DNA-protein adduct by the SPRTN metalloprotease. The polypeptide is Fanconi anemia group J protein homolog (brip1.L) (Xenopus laevis (African clawed frog)).